The chain runs to 281 residues: Fibrinogen-like protein 1-like protein (281 aa).

The first 33 residues, 1–33 (MGLQAGTRQLHGNLILLPVAVVMLLLCTSPVCA), serve as a signal peptide directing secretion. Positions 34–246 (TASVGLPADC…RPSSWSNPPM (213 aa)) constitute a Fibrinogen C-terminal domain. Disulfide bonds link C43-C69 and C201-C213. The span at 260 to 269 (PSRSPSLPSP) shows a compositional bias: low complexity. Positions 260-281 (PSRSPSLPSPITATHTVRNQLQ) are disordered. Residues 270–281 (ITATHTVRNQLQ) show a composition bias toward polar residues.

In terms of tissue distribution, expressed in smal intestine, colon and lung.

Its function is as follows. Shows a cytidine deaminase activity on 2'-deoxycytidine (in vitro), however shows no RNA editing activity (in vitro). The protein is Fibrinogen-like protein 1-like protein of Gallus gallus (Chicken).